Reading from the N-terminus, the 445-residue chain is Phosphoglucosamine mutase (445 aa).

Residue Ser102 is the Phosphoserine intermediate of the active site. Residues Ser102, Asp241, Asp243, and Asp245 each coordinate Mg(2+). Ser102 carries the phosphoserine modification.

This sequence belongs to the phosphohexose mutase family. Mg(2+) serves as cofactor. In terms of processing, activated by phosphorylation.

It catalyses the reaction alpha-D-glucosamine 1-phosphate = D-glucosamine 6-phosphate. Its function is as follows. Catalyzes the conversion of glucosamine-6-phosphate to glucosamine-1-phosphate. The protein is Phosphoglucosamine mutase of Shewanella halifaxensis (strain HAW-EB4).